The following is a 133-amino-acid chain: Small ribosomal subunit protein uS8 (133 aa).

The segment at 1 to 32 (MANHDPISDMLTRIRNASEKRHESTKVPASRM) is disordered. Residues 16 to 25 (NASEKRHEST) are compositionally biased toward basic and acidic residues.

Belongs to the universal ribosomal protein uS8 family. Part of the 30S ribosomal subunit. Contacts proteins S5 and S12.

In terms of biological role, one of the primary rRNA binding proteins, it binds directly to 16S rRNA central domain where it helps coordinate assembly of the platform of the 30S subunit. The sequence is that of Small ribosomal subunit protein uS8 from Synechococcus sp. (strain CC9311).